The chain runs to 246 residues: TVP38/TMEM64 family membrane protein MT0653 (246 aa).

Helical transmembrane passes span 19 to 39 (LVVFAGFLVGMFYLVAATDVI), 57 to 77 (LTYVVVSAVLGALFVPGPILA), 83 to 103 (LFGPLVGVFVTLGATVGTAVV), 157 to 177 (AFGTFGVPLWQMAVGAFIGSA), and 196 to 216 (LLASCAIAVWCVTAIIGAFAA).

It belongs to the TVP38/TMEM64 family.

The protein localises to the cell membrane. The protein is TVP38/TMEM64 family membrane protein MT0653 of Mycobacterium tuberculosis (strain CDC 1551 / Oshkosh).